An 837-amino-acid polypeptide reads, in one-letter code: MNKQNQLPLVGVRVADFGQQIAGPAVAMVLADLGATVVHIDPPGGPSWKHPANAILNRNKASLCIDLKTQAGLDQALELIENVDIVIESFRPGVMKRLGIDFVALRESRPELITLSMPGFASNDELHRDWKATEAIVAATSGTFTDMGFNRVLMGLNPSFSPLPLGSSYAISLAASSIALALFEREKTGRGDNIEVPIAAALMEGLSYNSYVVDQLPERYKTMRELEIEHRKSNNIKMDVSYAQLQEYLDPFYRTYVCADGRQFYCVCPSHRNHAERALKVLGIYDELVAEGLPEVKDLHVPISEWDGETSIGVYPLPKKWADLISEKMKKAFLQKTSDEWGVIFGEGQIPGAPHRSTEEWVNSEHCNASGLIVEVEGTEFGTMKQPGPIVWFENESEAMLKPKPQEHVSFEQALARLQSVAKIEKISRPTGQDIQPASGKGWLDGVKILDLTNVIAGPHSTAFMSRFGAEITKLDPVTPLYDPLIGILFTFQTGVGKQSALVNIMTKEGREVFERLVRSVDIVVINAPDRQMKPLGLDQDSLSAINPDVLFCRLDCFGGPRTGSKTNYIGYDDIIQANSGIMSRFGKPETPEEHAHLGTLDVNCGFAAALGMVIALYQKRKTGKVCRVRTSLSAVTNIAQIPFAFDYEGRAPFNEASGREAMGNHALSHFYRTNSGWVFLDSHQGELAKLDAIKGLNGIQQSQDMGQFLRDQLVKESSAYWLKEFAAADIACAEPFSIEYLREHNSRVADQKVGTDLGSYAFSIFPDHPSGHCITQVDPYSIRPREAKIRAVTPTEKFGCSTIKVLQGLGYSESDINDMLEKKIAATGWGREFLPS.

D602 (nucleophile) is an active-site residue.

This sequence belongs to the CoA-transferase III family.

Its function is as follows. Dimethyl sulfide (DMS)-producing enzyme. Acts both as a transferase and a lyase: uses acetyl-coenzyme A (acetyl-coA) and dimethylsulfoniopropionate (DMSP) as substrates to produce DMS, acetate and 3-hydroxypropionate-CoA (3HP-CoA). Mediates the CoA-transferase prior to lyase activity. DMS is the principal form by which sulfur is transported from oceans to the atmosphere and is a key component of the ocean sulfur cycle. This chain is CoA-transferase/lyase DddD, found in Marinomonas sp. (strain MWYL1).